The sequence spans 535 residues: Ribonuclease Y 2 (535 aa).

The chain crosses the membrane as a helical span at residues 1–21; sequence MLITGLIIGCLLIGLVIGYVV. Residues 207–268 form the KH domain; that stretch reads LEHTVTVPNG…IRREVARVAL (62 aa). The 94-residue stretch at 334–427 folds into the HD domain; it reads VLLHSIEVAQ…VAAADAISGA (94 aa).

The protein belongs to the RNase Y family.

The protein resides in the cell membrane. Its function is as follows. Endoribonuclease that initiates mRNA decay. The chain is Ribonuclease Y 2 from Levilactobacillus brevis (strain ATCC 367 / BCRC 12310 / CIP 105137 / JCM 1170 / LMG 11437 / NCIMB 947 / NCTC 947) (Lactobacillus brevis).